The primary structure comprises 566 residues: 4-coumarate--CoA ligase-like 6 (566 aa).

Residues 1–21 (MAATHLHIPPNPKTQTSHQNP) are disordered. Residues serine 212, serine 213, glycine 214, threonine 215, threonine 216, and lysine 220 each contribute to the ATP site. (E)-4-coumaroyl-AMP is bound at residue tyrosine 263. Arginine 284 is a binding site for CoA. The segment at 286–356 (DASDVVNVIE…QTLPHVDLIQ (71 aa)) is SBD1. Positions 334, 356, 357, and 361 each coordinate (E)-4-coumaroyl-AMP. Glutamine 356, glycine 357, threonine 361, aspartate 442, and arginine 457 together coordinate ATP. Positions 357-421 (GYGMTESTAV…IQGPGVMKGY (65 aa)) are SBD2. Residues lysine 459 and lysine 463 each coordinate (E)-4-coumaroyl-AMP. Residues lysine 465 and glycine 466 each contribute to the CoA site. An ATP-binding site is contributed by lysine 548. A Microbody targeting signal motif is present at residues 564 to 566 (SRL).

It belongs to the ATP-dependent AMP-binding enzyme family. Requires Mg(2+) as cofactor. Expressed at very low level in leaves.

Its subcellular location is the peroxisome. It catalyses the reaction (E)-4-coumarate + ATP + CoA = (E)-4-coumaroyl-CoA + AMP + diphosphate. The enzyme catalyses (E)-4-coumarate + ATP + H(+) = (E)-4-coumaroyl-AMP + diphosphate. The catalysed reaction is (E)-4-coumaroyl-AMP + CoA = (E)-4-coumaroyl-CoA + AMP + H(+). It carries out the reaction (E)-ferulate + ATP + CoA = (E)-feruloyl-CoA + AMP + diphosphate. It catalyses the reaction (E)-ferulate + ATP + H(+) = (E)-feruloyl-AMP + diphosphate. The enzyme catalyses (E)-feruloyl-AMP + CoA = (E)-feruloyl-CoA + AMP + H(+). The catalysed reaction is (E)-caffeate + ATP + CoA = (E)-caffeoyl-CoA + AMP + diphosphate. It carries out the reaction (E)-caffeate + ATP + H(+) = (E)-caffeoyl-AMP + diphosphate. It catalyses the reaction (E)-caffeoyl-AMP + CoA = (E)-caffeoyl-CoA + AMP + H(+). The enzyme catalyses (E)-cinnamate + ATP + CoA = (E)-cinnamoyl-CoA + AMP + diphosphate. The catalysed reaction is 4-hydroxybenzoate + ATP + CoA = 4-hydroxybenzoyl-CoA + AMP + diphosphate. It carries out the reaction tetradecanoate + ATP + CoA = tetradecanoyl-CoA + AMP + diphosphate. It catalyses the reaction hexanoate + ATP + CoA = hexanoyl-CoA + AMP + diphosphate. The enzyme catalyses heptanoate + ATP + CoA = heptanoyl-CoA + AMP + diphosphate. Its function is as follows. Contributes to jasmonic acid biosynthesis by initiating the beta-oxidative chain shortening of its precursors. Acts as a carboxylate--CoA ligase that can use preferentially p-coumarate, ferulate and caffeate as substrates and, with a lower efficiency, (E)-cinnamate and 4-hydroxybenzoate as substrates. Involved in the biosynthesis of ubiquinone from phenylalanine by activating the propyl side chain of 4-coumarate, and possibly trans-cinnamate and 4-hydroxybenzoate, for subsequent beta-oxidative shortening and the formation of the benzenoid moiety of ubiquinone. Follows a two-step reaction mechanism, wherein the carboxylate substrate first undergoes adenylation by ATP, followed by a thioesterification in the presence of CoA to yield the final CoA thioester. The chain is 4-coumarate--CoA ligase-like 6 from Arabidopsis thaliana (Mouse-ear cress).